Consider the following 481-residue polypeptide: Trigger factor (481 aa).

Positions 174–261 constitute a PPIase FKBP-type domain; that stretch reads GDIAVVGFKG…LKDLKTRELP (88 aa). The disordered stretch occupies residues 430 to 481; sequence ENSTVTEKAPEAESDAAKASKPAAAKKDASKAKTAKTSKAKTAKAESESAES. Residues 437–447 show a composition bias toward basic and acidic residues; sequence KAPEAESDAAK. Positions 462-471 are enriched in basic residues; that stretch reads KTAKTSKAKT. Residues 472–481 show a composition bias toward basic and acidic residues; sequence AKAESESAES.

This sequence belongs to the FKBP-type PPIase family. Tig subfamily.

Its subcellular location is the cytoplasm. The enzyme catalyses [protein]-peptidylproline (omega=180) = [protein]-peptidylproline (omega=0). Its function is as follows. Involved in protein export. Acts as a chaperone by maintaining the newly synthesized protein in an open conformation. Functions as a peptidyl-prolyl cis-trans isomerase. The polypeptide is Trigger factor (Synechococcus sp. (strain WH7803)).